Reading from the N-terminus, the 1287-residue chain is DNA-directed RNA polymerase subunit beta (1287 aa).

The protein belongs to the RNA polymerase beta chain family. As to quaternary structure, the RNAP catalytic core consists of 2 alpha, 1 beta, 1 beta' and 1 omega subunit. When a sigma factor is associated with the core the holoenzyme is formed, which can initiate transcription.

It catalyses the reaction RNA(n) + a ribonucleoside 5'-triphosphate = RNA(n+1) + diphosphate. Functionally, DNA-dependent RNA polymerase catalyzes the transcription of DNA into RNA using the four ribonucleoside triphosphates as substrates. In Salinibacter ruber (strain DSM 13855 / M31), this protein is DNA-directed RNA polymerase subunit beta.